Reading from the N-terminus, the 399-residue chain is Acetate kinase (399 aa).

Mg(2+) is bound at residue Asn-7. Lys-14 is a binding site for ATP. Residue Arg-91 participates in substrate binding. Residue Asp-148 is the Proton donor/acceptor of the active site. Residues 208-212 (HLGNG), 283-285 (DFR), and 331-335 (GLGEN) contribute to the ATP site. Position 384 (Glu-384) interacts with Mg(2+).

Belongs to the acetokinase family. Homodimer. The cofactor is Mg(2+). Mn(2+) serves as cofactor.

It is found in the cytoplasm. The enzyme catalyses acetate + ATP = acetyl phosphate + ADP. Its pathway is metabolic intermediate biosynthesis; acetyl-CoA biosynthesis; acetyl-CoA from acetate: step 1/2. Functionally, catalyzes the formation of acetyl phosphate from acetate and ATP. Can also catalyze the reverse reaction. The chain is Acetate kinase from Desulfitobacterium hafniense (strain DSM 10664 / DCB-2).